A 193-amino-acid polypeptide reads, in one-letter code: Probable nicotinate-nucleotide adenylyltransferase (193 aa).

This sequence belongs to the NadD family.

It carries out the reaction nicotinate beta-D-ribonucleotide + ATP + H(+) = deamido-NAD(+) + diphosphate. It participates in cofactor biosynthesis; NAD(+) biosynthesis; deamido-NAD(+) from nicotinate D-ribonucleotide: step 1/1. Functionally, catalyzes the reversible adenylation of nicotinate mononucleotide (NaMN) to nicotinic acid adenine dinucleotide (NaAD). This chain is Probable nicotinate-nucleotide adenylyltransferase, found in Flavobacterium johnsoniae (strain ATCC 17061 / DSM 2064 / JCM 8514 / BCRC 14874 / CCUG 350202 / NBRC 14942 / NCIMB 11054 / UW101) (Cytophaga johnsonae).